Consider the following 1040-residue polypeptide: Multidrug resistance protein MdtB (1040 aa).

12 helical membrane passes run 16–36, 342–362, 369–389, 396–416, 440–460, 472–492, 537–557, 863–883, 888–908, 911–931, 968–988, and 998–1018; these read FIMR…AGII, DTQF…YLFL, IIPG…MVFL, LTLM…IVVI, IGFT…PLLF, FAVT…TLTP, WLTL…WVFI, LGST…VLGV, FIHP…ALLA, LAGS…IGIV, ILMT…STGV, and IGMV…TPVI.

Belongs to the resistance-nodulation-cell division (RND) (TC 2.A.6) family. MdtB subfamily. As to quaternary structure, part of a tripartite efflux system composed of MdtA, MdtB and MdtC. MdtB forms a heteromultimer with MdtC.

The protein localises to the cell inner membrane. This is Multidrug resistance protein MdtB from Klebsiella pneumoniae (strain 342).